Reading from the N-terminus, the 84-residue chain is Large ribosomal subunit protein bL27 (84 aa).

A disordered region spans residues 1–22 (MAHKKGASSTRNGRDSNAQRLG). Residues 7–19 (ASSTRNGRDSNAQ) are compositionally biased toward polar residues.

It belongs to the bacterial ribosomal protein bL27 family.

This Streptomyces coelicolor (strain ATCC BAA-471 / A3(2) / M145) protein is Large ribosomal subunit protein bL27.